A 378-amino-acid polypeptide reads, in one-letter code: Acetylornithine deacetylase (378 aa).

A Zn(2+)-binding site is contributed by His-76. The active site involves Asp-78. Zn(2+) is bound at residue Asp-108. The active site involves Glu-140. Positions 141, 165, and 351 each coordinate Zn(2+).

It belongs to the peptidase M20A family. ArgE subfamily. Homodimer. Requires Zn(2+) as cofactor. The cofactor is Co(2+). It depends on glutathione as a cofactor.

It is found in the cytoplasm. The enzyme catalyses N(2)-acetyl-L-ornithine + H2O = L-ornithine + acetate. The protein operates within amino-acid biosynthesis; L-arginine biosynthesis; L-ornithine from N(2)-acetyl-L-ornithine (linear): step 1/1. In terms of biological role, catalyzes the hydrolysis of the amide bond of N(2)-acetylated L-amino acids. Cleaves the acetyl group from N-acetyl-L-ornithine to form L-ornithine, an intermediate in L-arginine biosynthesis pathway, and a branchpoint in the synthesis of polyamines. The chain is Acetylornithine deacetylase from Vibrio atlanticus (strain LGP32) (Vibrio splendidus (strain Mel32)).